Here is a 391-residue protein sequence, read N- to C-terminus: Putative F-box protein At1g47730 (391 aa).

A compositionally biased stretch (basic and acidic residues) spans Met-1–Gln-12. Residues Met-1–Leu-25 form a disordered region. The region spanning Lys-19–Arg-68 is the F-box domain.

In Arabidopsis thaliana (Mouse-ear cress), this protein is Putative F-box protein At1g47730.